A 99-amino-acid polypeptide reads, in one-letter code: Goannatyrotoxin-Vere1 (99 aa).

A signal peptide spans 1–28; it reads MIASMKPWPLVMVAALCILFCLGTLVDA. At Tyr-64 the chain carries Tyrosine amide. A propeptide spans 68–99 (C-terminal extension); it reads SSPETLMSELIFGENSNSDHSSRSRFDDSYMW.

It belongs to the NPY family. In terms of tissue distribution, expressed by the mandibular venom gland.

It is found in the secreted. In terms of biological role, shows a potent unique triphasic action, rapid biphasic hypertension followed by prolonged hypotension. This is Goannatyrotoxin-Vere1 from Varanus eremius (Rusty desert monitor).